The sequence spans 62 residues: Sperm protamine P1 (62 aa).

Residues 1–62 are disordered; that stretch reads MARYRRHSRS…RRYSRRGRRR (62 aa).

Belongs to the protamine P1 family. As to expression, testis.

It localises to the nucleus. Its subcellular location is the chromosome. Its function is as follows. Protamines substitute for histones in the chromatin of sperm during the haploid phase of spermatogenesis. They compact sperm DNA into a highly condensed, stable and inactive complex. This is Sperm protamine P1 (PRM1) from Pseudantechinus bilarni (Sandstone dibbler).